The following is a 426-amino-acid chain: Mediator of RNA polymerase II transcription subunit 1 (426 aa).

The disordered stretch occupies residues 319-349 (ISTSNSGSVQPKPRRKSSVLSNRRPSMTDSM). Over residues 336–347 (SVLSNRRPSMTD) the composition is skewed to polar residues.

The protein belongs to the Mediator complex subunit 1 family. As to quaternary structure, component of the Mediator complex.

It is found in the nucleus. Component of the Mediator complex, a coactivator involved in the regulated transcription of nearly all RNA polymerase II-dependent genes. Mediator functions as a bridge to convey information from gene-specific regulatory proteins to the basal RNA polymerase II transcription machinery. Mediator is recruited to promoters by direct interactions with regulatory proteins and serves as a scaffold for the assembly of a functional preinitiation complex with RNA polymerase II and the general transcription factors. This Kluyveromyces lactis (strain ATCC 8585 / CBS 2359 / DSM 70799 / NBRC 1267 / NRRL Y-1140 / WM37) (Yeast) protein is Mediator of RNA polymerase II transcription subunit 1 (MED1).